Here is a 156-residue protein sequence, read N- to C-terminus: 6,7-dimethyl-8-ribityllumazine synthase (156 aa).

Residues Phe23, 57–59 (AYE), and 81–83 (AVI) contribute to the 5-amino-6-(D-ribitylamino)uracil site. 86–87 (ST) contacts (2S)-2-hydroxy-3-oxobutyl phosphate. His89 (proton donor) is an active-site residue. Position 114 (Phe114) interacts with 5-amino-6-(D-ribitylamino)uracil. Arg128 is a (2S)-2-hydroxy-3-oxobutyl phosphate binding site.

Belongs to the DMRL synthase family.

The catalysed reaction is (2S)-2-hydroxy-3-oxobutyl phosphate + 5-amino-6-(D-ribitylamino)uracil = 6,7-dimethyl-8-(1-D-ribityl)lumazine + phosphate + 2 H2O + H(+). Its pathway is cofactor biosynthesis; riboflavin biosynthesis; riboflavin from 2-hydroxy-3-oxobutyl phosphate and 5-amino-6-(D-ribitylamino)uracil: step 1/2. Functionally, catalyzes the formation of 6,7-dimethyl-8-ribityllumazine by condensation of 5-amino-6-(D-ribitylamino)uracil with 3,4-dihydroxy-2-butanone 4-phosphate. This is the penultimate step in the biosynthesis of riboflavin. This Helicobacter hepaticus (strain ATCC 51449 / 3B1) protein is 6,7-dimethyl-8-ribityllumazine synthase.